The primary structure comprises 121 residues: Large ribosomal subunit protein uL14 (121 aa).

Belongs to the universal ribosomal protein uL14 family. As to quaternary structure, part of the 50S ribosomal subunit. Forms a cluster with proteins L3 and L19. In the 70S ribosome, L14 and L19 interact and together make contacts with the 16S rRNA in bridges B5 and B8.

In terms of biological role, binds to 23S rRNA. Forms part of two intersubunit bridges in the 70S ribosome. In Phocaeicola vulgatus (strain ATCC 8482 / DSM 1447 / JCM 5826 / CCUG 4940 / NBRC 14291 / NCTC 11154) (Bacteroides vulgatus), this protein is Large ribosomal subunit protein uL14.